The sequence spans 202 residues: Thymidylate kinase (202 aa).

7–14 (GIDGSGKT) is a binding site for ATP.

This sequence belongs to the thymidylate kinase family.

It carries out the reaction dTMP + ATP = dTDP + ADP. Functionally, phosphorylation of dTMP to form dTDP in both de novo and salvage pathways of dTTP synthesis. The protein is Thymidylate kinase of Ehrlichia ruminantium (strain Gardel).